The primary structure comprises 337 residues: Lipoyl synthase (337 aa).

[4Fe-4S] cluster contacts are provided by Cys-81, Cys-86, Cys-92, Cys-107, Cys-111, Cys-114, and Ser-323. The Radical SAM core domain occupies 93 to 312; sequence FSHGTATFMI…EDYGNALGFS (220 aa).

This sequence belongs to the radical SAM superfamily. Lipoyl synthase family. [4Fe-4S] cluster is required as a cofactor.

The protein resides in the cytoplasm. The enzyme catalyses [[Fe-S] cluster scaffold protein carrying a second [4Fe-4S](2+) cluster] + N(6)-octanoyl-L-lysyl-[protein] + 2 oxidized [2Fe-2S]-[ferredoxin] + 2 S-adenosyl-L-methionine + 4 H(+) = [[Fe-S] cluster scaffold protein] + N(6)-[(R)-dihydrolipoyl]-L-lysyl-[protein] + 4 Fe(3+) + 2 hydrogen sulfide + 2 5'-deoxyadenosine + 2 L-methionine + 2 reduced [2Fe-2S]-[ferredoxin]. It functions in the pathway protein modification; protein lipoylation via endogenous pathway; protein N(6)-(lipoyl)lysine from octanoyl-[acyl-carrier-protein]: step 2/2. Its function is as follows. Catalyzes the radical-mediated insertion of two sulfur atoms into the C-6 and C-8 positions of the octanoyl moiety bound to the lipoyl domains of lipoate-dependent enzymes, thereby converting the octanoylated domains into lipoylated derivatives. The protein is Lipoyl synthase of Xanthomonas campestris pv. campestris (strain B100).